Reading from the N-terminus, the 930-residue chain is Polypeptide N-acetylgalactosaminyltransferase 5 (930 aa).

The Cytoplasmic portion of the chain corresponds to 1–12; sequence MNKIRKFFRGSG. The helical; Signal-anchor for type II membrane protein transmembrane segment at 13-35 threads the bilayer; the sequence is RVLAFIFVASVIWLLFDMAALRL. The Lumenal segment spans residues 36-930; that stretch reads SFSEINTGIL…KWKFEKYYDV (895 aa). The disordered stretch occupies residues 163-210; it reads GSEKDSFTVSRGVPLNKTAEHTETLDKKQEAPENYNLSSDTSKQASQR. The N-linked (GlcNAc...) asparagine glycan is linked to asparagine 178. The span at 180 to 193 shows a compositional bias: basic and acidic residues; sequence TAEHTETLDKKQEA. Polar residues predominate over residues 197 to 210; the sequence is YNLSSDTSKQASQR. N-linked (GlcNAc...) asparagine glycans are attached at residues asparagine 198 and asparagine 213. Phosphoserine is present on serine 285. N-linked (GlcNAc...) asparagine glycosylation is found at asparagine 287 and asparagine 309. The interval 344–377 is disordered; the sequence is LGESQGKHIPRSQSQTLSSPLAPKRAVSQSKPTL. 2 N-linked (GlcNAc...) asparagine glycosylation sites follow: asparagine 387 and asparagine 403. Disulfide bonds link cysteine 476–cysteine 708, cysteine 699–cysteine 779, and cysteine 812–cysteine 825. Residues 485–594 form a catalytic subdomain A region; it reads LPTTSIIMCF…VGWLEPLLER (110 aa). Aspartate 526 and arginine 555 together coordinate substrate. Asparagine 568 carries an N-linked (GlcNAc...) asparagine glycan. Aspartate 578 serves as a coordination point for Mn(2+). Serine 579 contributes to the substrate binding site. A Mn(2+)-binding site is contributed by histidine 580. Residues 654–716 are catalytic subdomain B; the sequence is IIRCPVMAGG…PCSRVGHIFR (63 aa). Tryptophan 685 contacts substrate. Histidine 713 is a binding site for Mn(2+). 2 residues coordinate substrate: arginine 716 and tyrosine 721. Asparagine 766, asparagine 817, and asparagine 835 each carry an N-linked (GlcNAc...) asparagine glycan. A Ricin B-type lectin domain is found at 794 to 925; the sequence is KAPVVRASGV…TEPQQKWKFE (132 aa). Disulfide bonds link cysteine 848–cysteine 863 and cysteine 898–cysteine 913. Residue asparagine 902 is glycosylated (N-linked (GlcNAc...) asparagine).

Belongs to the glycosyltransferase 2 family. GalNAc-T subfamily. In terms of assembly, interacts with EXT2. Does not interact with EXT1, EXTL1 or EXTL3. The cofactor is Mn(2+). Predominantly expressed in sublingual gland. Expressed at lower level in stomach and small intestine. Weakly or not expressed in submandibular gland, parotid gland, kidney, liver, heart, brain, spleen, lung, skeletal muscle, testis, ovary, cervix and uterus.

It localises to the golgi apparatus membrane. It catalyses the reaction L-seryl-[protein] + UDP-N-acetyl-alpha-D-galactosamine = a 3-O-[N-acetyl-alpha-D-galactosaminyl]-L-seryl-[protein] + UDP + H(+). It carries out the reaction L-threonyl-[protein] + UDP-N-acetyl-alpha-D-galactosamine = a 3-O-[N-acetyl-alpha-D-galactosaminyl]-L-threonyl-[protein] + UDP + H(+). It participates in protein modification; protein glycosylation. Catalyzes the initial reaction in O-linked oligosaccharide biosynthesis, the transfer of an N-acetyl-D-galactosamine residue to a serine or threonine residue on the protein receptor. Has activity toward EA2 peptide substrate, but has a weak activity toward Muc2, Muc1b, rMuc-2 or mG-Muc substrates. This Rattus norvegicus (Rat) protein is Polypeptide N-acetylgalactosaminyltransferase 5 (Galnt5).